An 877-amino-acid chain; its full sequence is DNA polymerase I (877 aa).

Positions 177–270 constitute a 5'-3' exonuclease domain; sequence TPAQFIDLKA…LEDLVYSGPD (94 aa). The region spanning 302–465 is the 3'-5' exonuclease domain; sequence DFTIVDQISQ…TEPILLEKLS (164 aa).

The protein belongs to the DNA polymerase type-A family. In terms of assembly, single-chain monomer with multiple functions.

It catalyses the reaction DNA(n) + a 2'-deoxyribonucleoside 5'-triphosphate = DNA(n+1) + diphosphate. In addition to polymerase activity, this DNA polymerase exhibits 3'-5' and 5'-3' exonuclease activity. The sequence is that of DNA polymerase I (polA) from Streptococcus pneumoniae (strain ATCC BAA-255 / R6).